We begin with the raw amino-acid sequence, 398 residues long: 1-deoxy-D-xylulose 5-phosphate reductoisomerase (398 aa).

Residues T10, G11, S12, I13, G36, R37, N38, and N124 each coordinate NADPH. K125 serves as a coordination point for 1-deoxy-D-xylulose 5-phosphate. E126 contributes to the NADPH binding site. D150 lines the Mn(2+) pocket. 1-deoxy-D-xylulose 5-phosphate is bound by residues S151, E152, S186, and H209. E152 is a binding site for Mn(2+). NADPH is bound at residue G215. Positions 222, 227, 228, and 231 each coordinate 1-deoxy-D-xylulose 5-phosphate. E231 is a binding site for Mn(2+).

It belongs to the DXR family. Homodimer. Mg(2+) is required as a cofactor. The cofactor is Mn(2+).

It catalyses the reaction 2-C-methyl-D-erythritol 4-phosphate + NADP(+) = 1-deoxy-D-xylulose 5-phosphate + NADPH + H(+). It participates in isoprenoid biosynthesis; isopentenyl diphosphate biosynthesis via DXP pathway; isopentenyl diphosphate from 1-deoxy-D-xylulose 5-phosphate: step 1/6. Catalyzes the NADPH-dependent rearrangement and reduction of 1-deoxy-D-xylulose-5-phosphate (DXP) to 2-C-methyl-D-erythritol 4-phosphate (MEP). The sequence is that of 1-deoxy-D-xylulose 5-phosphate reductoisomerase from Yersinia pseudotuberculosis serotype IB (strain PB1/+).